The following is a 275-amino-acid chain: Exosome complex component Rrp42 (275 aa).

Belongs to the RNase PH family. Rrp42 subfamily. As to quaternary structure, component of the archaeal exosome complex. Forms a hexameric ring-like arrangement composed of 3 Rrp41-Rrp42 heterodimers. The hexameric ring associates with a trimer of Rrp4 and/or Csl4 subunits.

Its subcellular location is the cytoplasm. Its function is as follows. Non-catalytic component of the exosome, which is a complex involved in RNA degradation. Contributes to the structuring of the Rrp41 active site. This chain is Exosome complex component Rrp42, found in Saccharolobus solfataricus (strain ATCC 35092 / DSM 1617 / JCM 11322 / P2) (Sulfolobus solfataricus).